Reading from the N-terminus, the 135-residue chain is Large ribosomal subunit protein uL16c (135 aa).

The segment covering 1-17 (MLSPKRTKFRKQHRNRM) has biased composition (basic residues). The interval 1-22 (MLSPKRTKFRKQHRNRMNGKAS) is disordered.

This sequence belongs to the universal ribosomal protein uL16 family. Part of the 50S ribosomal subunit.

It localises to the plastid. The protein localises to the chloroplast. This is Large ribosomal subunit protein uL16c from Gracilaria tenuistipitata (Red alga).